The following is an 843-amino-acid chain: Protein PLASTID MOVEMENT IMPAIRED 1 (843 aa).

A compositionally biased stretch (polar residues) spans 30 to 58 (PQVSVGNRRTNSLALPRSSVPSLVTSADE). 2 disordered regions span residues 30 to 65 (PQVSVGNRRTNSLALPRSSVPSLVTSADEVSTARAE) and 88 to 116 (LEVEEEENVTQSNRIVKKPEESSSGSGVK). A C2 NT-type domain is found at 131-284 (LVRIGMQKLS…ELALKLGFQI (154 aa)). 2 disordered regions span residues 300-412 (FGMK…GTIG) and 450-472 (MMKDESDGGDGETESQRLDEEEQ). Over residues 307 to 336 (KPKNFANSFGRKQSKTSFSVPSPKMTSRSE) the composition is skewed to polar residues. Residues Ser-314 and Ser-328 each carry the phosphoserine modification. Over residues 365–381 (PEEKPVQKNDKPEQRAE) the composition is skewed to basic and acidic residues. Residue Thr-404 is modified to Phosphothreonine. Ser-407 bears the Phosphoserine mark. Thr-410 is modified (phosphothreonine). The span at 456-472 (DGGDGETESQRLDEEEQ) shows a compositional bias: acidic residues. Ser-507 carries the phosphoserine modification.

Expressed in leaves, stems, cauline leaves, and flowers but not in roots. Present in leaves in both mesophyll and pavement cells.

It localises to the cytoplasm. Necessary for chloroplast and nuclear photorelocation movements via the regulation of chloroplast-actin (cp-actin) filaments in mesophyll cells, and together with PMIR1, in pavement cells. Required component for both the low- and high-light-dependent chloroplast movement responses via an abscisic acid (ABA) pathway. Involved in the ABA response pathway during seed germination. Modulates ABA accumulation during periods of water deficit at the seedling stage. The sequence is that of Protein PLASTID MOVEMENT IMPAIRED 1 from Arabidopsis thaliana (Mouse-ear cress).